Here is a 211-residue protein sequence, read N- to C-terminus: uncharacterized protein (211 aa).

This is an uncharacterized protein from Dictyostelium discoideum (Social amoeba).